We begin with the raw amino-acid sequence, 106 residues long: MEEGELSTGAAAGGGDELYNALHQRLVASGEWQRLLILLRRMLDESGWESEFQAYATTKAKQQPVLSVPDLIDVLTPHAQDTLPAHVRAHLLDKLTNFLDRNLEDA.

This sequence belongs to the ENY2 family. As to quaternary structure, component of the nuclear pore complex (NPC)-associated TREX-2 complex (transcription and export complex 2), composed of at least SUS1, SAC3, THP1, SEM1, and CDC31. TREX-2 contains 2 SUS1 chains. The TREX-2 complex interacts with the nucleoporin NUP1. Component of the 1.8 MDa SAGA transcription coactivator-HAT complex. SAGA is built of 5 distinct domains with specialized functions. Within the SAGA complex, SUS1, SGF11, SGF73 and UBP8 form an additional subcomplex of SAGA called the DUB module (deubiquitination module). Interacts directly with THP1, SAC3, SGF11, and with the RNA polymerase II.

The protein resides in the nucleus. The protein localises to the nucleoplasm. It localises to the cytoplasm. Its subcellular location is the P-body. Its function is as follows. Involved in mRNA export coupled transcription activation by association with both the TREX-2 and the SAGA complexes. At the promoters, SAGA is required for recruitment of the basal transcription machinery. It influences RNA polymerase II transcriptional activity through different activities such as TBP interaction and promoter selectivity, interaction with transcription activators, and chromatin modification through histone acetylation and deubiquitination. Within the SAGA complex, participates in a subcomplex required for deubiquitination of H2B and for the maintenance of steady-state H3 methylation levels. The TREX-2 complex functions in docking export-competent ribonucleoprotein particles (mRNPs) to the nuclear entrance of the nuclear pore complex (nuclear basket). TREX-2 participates in mRNA export and accurate chromatin positioning in the nucleus by tethering genes to the nuclear periphery. May also be involved in cytoplasmic mRNA decay by interaction with components of P-bodies. This is Transcription and mRNA export factor SUS1 from Mycosarcoma maydis (Corn smut fungus).